The following is a 247-amino-acid chain: 2,3-bisphosphoglycerate-dependent phosphoglycerate mutase (247 aa).

Substrate-binding positions include 8 to 15 (RHGESTWN), 21 to 22 (TG), R60, 87 to 90 (ERHY), K98, 114 to 115 (RR), and 183 to 184 (GN). Residue H9 is the Tele-phosphohistidine intermediate of the active site. Residue E87 is the Proton donor/acceptor of the active site.

The protein belongs to the phosphoglycerate mutase family. BPG-dependent PGAM subfamily. Homodimer.

It carries out the reaction (2R)-2-phosphoglycerate = (2R)-3-phosphoglycerate. It functions in the pathway carbohydrate degradation; glycolysis; pyruvate from D-glyceraldehyde 3-phosphate: step 3/5. In terms of biological role, catalyzes the interconversion of 2-phosphoglycerate and 3-phosphoglycerate. This chain is 2,3-bisphosphoglycerate-dependent phosphoglycerate mutase, found in Acidovorax sp. (strain JS42).